Here is a 251-residue protein sequence, read N- to C-terminus: Ubiquinone/menaquinone biosynthesis C-methyltransferase UbiE (251 aa).

S-adenosyl-L-methionine-binding positions include Thr74, Asp95, 123–124 (NA), and Ser140.

The protein belongs to the class I-like SAM-binding methyltransferase superfamily. MenG/UbiE family.

The enzyme catalyses a 2-demethylmenaquinol + S-adenosyl-L-methionine = a menaquinol + S-adenosyl-L-homocysteine + H(+). It catalyses the reaction a 2-methoxy-6-(all-trans-polyprenyl)benzene-1,4-diol + S-adenosyl-L-methionine = a 5-methoxy-2-methyl-3-(all-trans-polyprenyl)benzene-1,4-diol + S-adenosyl-L-homocysteine + H(+). It participates in quinol/quinone metabolism; menaquinone biosynthesis; menaquinol from 1,4-dihydroxy-2-naphthoate: step 2/2. Its pathway is cofactor biosynthesis; ubiquinone biosynthesis. Its function is as follows. Methyltransferase required for the conversion of demethylmenaquinol (DMKH2) to menaquinol (MKH2) and the conversion of 2-polyprenyl-6-methoxy-1,4-benzoquinol (DDMQH2) to 2-polyprenyl-3-methyl-6-methoxy-1,4-benzoquinol (DMQH2). This chain is Ubiquinone/menaquinone biosynthesis C-methyltransferase UbiE, found in Pectobacterium atrosepticum (strain SCRI 1043 / ATCC BAA-672) (Erwinia carotovora subsp. atroseptica).